A 609-amino-acid chain; its full sequence is Protein tesmin/TSO1-like CXC 3 (609 aa).

Positions 69-84 (ESRFRSQKDVSASKEV) are enriched in basic and acidic residues. Disordered stretches follow at residues 69–102 (ESRF…YKND), 307–328 (PISP…SSCK), 457–477 (LFEQ…KTQQ), and 569–609 (NSKR…TPHH). The region spanning 326 to 451 (SCKRCNCKKS…RCEGCKNAFG (126 aa)) is the CRC domain. Polar residues predominate over residues 466 to 477 (TSGTPGTKKTQQ).

This sequence belongs to the lin-54 family. Ubiquitous but expressed mostly in flowers and at significant levels in leaves. Detected with highest levels in developing ovules and microspores, and in petals.

It is found in the nucleus. In terms of biological role, plays a role in development of both male and female reproductive tissues. In Arabidopsis thaliana (Mouse-ear cress), this protein is Protein tesmin/TSO1-like CXC 3 (TCX3).